The following is a 205-amino-acid chain: Ras-related protein rab-6.1 (205 aa).

GTP-binding positions include glycine 18–threonine 25, threonine 43, aspartate 66–glutamine 70, and asparagine 124–aspartate 127. S-geranylgeranyl cysteine attachment occurs at residues cysteine 203 and cysteine 205. A Cysteine methyl ester modification is found at cysteine 205.

Belongs to the small GTPase superfamily. Rab family. Interacts with GARP complex component vps-52. Highly expressed in body wall muscle, intestine, somatic gonad, distal tip cells, vulva, and neurons including AVB, AVD, RIG, and PVC (at protein level). Not expressed in AVA and RMDV neurons.

Its subcellular location is the cell membrane. The protein localises to the cell projection. The protein resides in the dendrite. It localises to the perikaryon. It is found in the golgi apparatus. Its subcellular location is the cytoplasmic vesicle. The protein localises to the secretory vesicle. The small GTPases Rab are key regulators of intracellular membrane trafficking, from the formation of transport vesicles to their fusion with membranes. Rabs cycle between an inactive GDP-bound form and an active GTP-bound form that is able to recruit to membranes different set of downstream effectors directly responsible for vesicle formation, movement, tethering and fusion. In its active GTP-bound form, acts redundantly with rab-6.2 (in its active GTP-bound form) to positively regulate the retrograde trafficking of cargo molecules from endosomes to Golgi structures. Required for the retrograde trafficking of glr-1, a subunit of AMPA-type glutamate receptors (AMPRs), out of early endosomes and into the Golgi compartment in neurons. Together with rab-6.2, promotes the retrograde trafficking of mig-14 from endosomes to Golgi structures in the intestine. In oocytes, in its active GTP-bound form, involved in the membrane fusion and exocytosis of secretory vesicles (cortical granules) to play a role in the remodeling of the embryo surface following fertilization. Recruits sep-1 to cortical granules (derived from the Golgi complex) for exocytosis during the oocyte-to-embryo transition. Required for seam cell division and alae formation. Promotes spontaneous reversals in locomotion. This chain is Ras-related protein rab-6.1, found in Caenorhabditis elegans.